The following is a 434-amino-acid chain: D-amino acid dehydrogenase (434 aa).

3–17 (VVILGSGVVGVTSAW) is a binding site for FAD.

Belongs to the DadA oxidoreductase family. FAD is required as a cofactor.

The catalysed reaction is a D-alpha-amino acid + A + H2O = a 2-oxocarboxylate + AH2 + NH4(+). Its pathway is amino-acid degradation; D-alanine degradation; NH(3) and pyruvate from D-alanine: step 1/1. Its function is as follows. Oxidative deamination of D-amino acids. The sequence is that of D-amino acid dehydrogenase from Yersinia pseudotuberculosis serotype O:1b (strain IP 31758).